Consider the following 1058-residue polypeptide: Carbamoyl phosphate synthase large chain (1058 aa).

The tract at residues 1-401 (MPKRKDIKTI…SLLKAIRSLE (401 aa)) is carboxyphosphate synthetic domain. The ATP site is built by arginine 129, arginine 169, glycine 175, glycine 176, lysine 208, isoleucine 210, glutamate 215, glycine 241, isoleucine 242, histidine 243, glutamine 284, and glutamate 298. The ATP-grasp 1 domain maps to 133–327 (RDLMNELNEP…IAKIAAKIAV (195 aa)). Residues glutamine 284, glutamate 298, and asparagine 300 each coordinate Mg(2+). Positions 284, 298, and 300 each coordinate Mn(2+). An oligomerization domain region spans residues 402-546 (YGVHHLGLPN…YSTYEFENES (145 aa)). The segment at 547 to 929 (TRSDKEKIVV…ALYKGLTAAG (383 aa)) is carbamoyl phosphate synthetic domain. The 191-residue stretch at 671-861 (EKLLIGLKIP…VANIAMQCIL (191 aa)) folds into the ATP-grasp 2 domain. Residues arginine 707, arginine 746, leucine 748, glutamate 752, glycine 777, valine 778, histidine 779, serine 780, glutamine 820, and glutamate 832 each coordinate ATP. The Mg(2+) site is built by glutamine 820, glutamate 832, and asparagine 834. Mn(2+) contacts are provided by glutamine 820, glutamate 832, and asparagine 834. Residues 930 to 1058 (IKIKDYGRVL…ESMSFRVQTL (129 aa)) form the MGS-like domain. An allosteric domain region spans residues 930 to 1058 (IKIKDYGRVL…ESMSFRVQTL (129 aa)).

The protein belongs to the CarB family. Composed of two chains; the small (or glutamine) chain promotes the hydrolysis of glutamine to ammonia, which is used by the large (or ammonia) chain to synthesize carbamoyl phosphate. Tetramer of heterodimers (alpha,beta)4. Mg(2+) is required as a cofactor. Mn(2+) serves as cofactor.

The catalysed reaction is hydrogencarbonate + L-glutamine + 2 ATP + H2O = carbamoyl phosphate + L-glutamate + 2 ADP + phosphate + 2 H(+). It catalyses the reaction hydrogencarbonate + NH4(+) + 2 ATP = carbamoyl phosphate + 2 ADP + phosphate + 2 H(+). The protein operates within amino-acid biosynthesis; L-arginine biosynthesis; carbamoyl phosphate from bicarbonate: step 1/1. Its pathway is pyrimidine metabolism; UMP biosynthesis via de novo pathway; (S)-dihydroorotate from bicarbonate: step 1/3. In terms of biological role, large subunit of the glutamine-dependent carbamoyl phosphate synthetase (CPSase). CPSase catalyzes the formation of carbamoyl phosphate from the ammonia moiety of glutamine, carbonate, and phosphate donated by ATP, constituting the first step of 2 biosynthetic pathways, one leading to arginine and/or urea and the other to pyrimidine nucleotides. The large subunit (synthetase) binds the substrates ammonia (free or transferred from glutamine from the small subunit), hydrogencarbonate and ATP and carries out an ATP-coupled ligase reaction, activating hydrogencarbonate by forming carboxy phosphate which reacts with ammonia to form carbamoyl phosphate. The polypeptide is Carbamoyl phosphate synthase large chain (Fusobacterium nucleatum subsp. nucleatum (strain ATCC 25586 / DSM 15643 / BCRC 10681 / CIP 101130 / JCM 8532 / KCTC 2640 / LMG 13131 / VPI 4355)).